Here is a 243-residue protein sequence, read N- to C-terminus: ATP synthase subunit a (243 aa).

A run of 8 helical transmembrane segments spans residues 28-48 (SSLY…AGVF), 52-72 (VIPG…LGII), 83-103 (YFPL…VGML), 114-134 (HIVV…LIGL), 141-161 (FFAM…MIFL), 177-197 (LTAN…FVYP), 200-220 (LLIS…EVFI), and 221-241 (AMLQ…DSLF).

The protein belongs to the ATPase A chain family. F-type ATPases have 2 components, CF(1) - the catalytic core - and CF(0) - the membrane proton channel. CF(1) has five subunits: alpha(3), beta(3), gamma(1), delta(1), epsilon(1). CF(0) has three main subunits: a(1), b(2) and c(9-12). The alpha and beta chains form an alternating ring which encloses part of the gamma chain. CF(1) is attached to CF(0) by a central stalk formed by the gamma and epsilon chains, while a peripheral stalk is formed by the delta and b chains.

The protein resides in the cell inner membrane. Key component of the proton channel; it plays a direct role in the translocation of protons across the membrane. The chain is ATP synthase subunit a from Neorickettsia sennetsu (strain ATCC VR-367 / Miyayama) (Ehrlichia sennetsu).